A 67-amino-acid polypeptide reads, in one-letter code: Kappa-conotoxin-like 2 (67 aa).

Positions 1 to 26 are cleaved as a signal peptide; sequence MMFRLTSVSCFLLVIACLNLFQVVLT. 4 cysteine pairs are disulfide-bonded: Cys29–Cys43, Cys36–Cys48, Cys42–Cys51, and Cys47–Cys55. At Phe59 the chain carries Phenylalanine amide. Residues 63-67 constitute a propeptide that is removed on maturation; sequence ATFQE.

Belongs to the conotoxin I2 superfamily. Expressed by the venom duct.

The protein localises to the secreted. Its function is as follows. Inhibits the vertebrate voltage-gated potassium channels Kv1.1/KCNA1 and Kv1.3/KCNA3. This Conus vexillum (Flag cone) protein is Kappa-conotoxin-like 2.